Consider the following 114-residue polypeptide: Non-specific lipid-transfer protein 1 (114 aa).

A signal peptide spans 1–25; sequence MIKGLAITVVAVLAVVQLLARPSDA. 4 disulfides stabilise this stretch: C29/C76, C39/C53, C54/C99, and C74/C113.

This sequence belongs to the plant LTP family. In terms of tissue distribution, expressed in seeds and, at very low levels, in pulp of fruit (at protein level).

In terms of biological role, plant non-specific lipid-transfer proteins transfer phospholipids as well as galactolipids across membranes. May play a role in wax or cutin deposition in the cell walls of expanding epidermal cells and certain secretory tissues. This is Non-specific lipid-transfer protein 1 from Actinidia chinensis var. chinensis (Chinese soft-hair kiwi).